Here is a 168-residue protein sequence, read N- to C-terminus: MATVTSTTVAIPSFSGLKTNAATKVSAMAKIPTSTSQSPRLCVRASLKDFGVALVATAASAVLASNALAVEVLLGASDGGLAFVPSSLEVSAGETIVFKNNAGFPHNVVFDEDEIPAGVDASKISMPEEDLLNAPGETYSVKLDAKGTYKFYCSPHQGAGMVGQVTVN.

A chloroplast-targeting transit peptide spans 1–69; sequence MATVTSTTVA…SAVLASNALA (69 aa). The region spanning 70 to 168 is the Plastocyanin-like domain; the sequence is VEVLLGASDG…AGMVGQVTVN (99 aa). His106, Cys153, His156, and Met161 together coordinate Cu cation.

The protein belongs to the plastocyanin family. Requires Cu(2+) as cofactor.

The protein resides in the plastid. Its subcellular location is the chloroplast thylakoid membrane. Participates in electron transfer between P700 and the cytochrome b6-f complex in photosystem I. The sequence is that of Plastocyanin, chloroplastic (PETE) from Pisum sativum (Garden pea).